A 216-amino-acid polypeptide reads, in one-letter code: Squamosa promoter-binding-like protein 13 (216 aa).

The segment at 32 to 110 (GDGGAALPSP…PSGGGGGPRC (79 aa)) is disordered. A compositionally biased stretch (low complexity) spans 67–91 (SSSAAVAAGASSSSSSSSVAAAARR). Positions 94–108 (GRAGGGAPSGGGGGP) are enriched in gly residues. Residues 107-184 (GPRCQVERCG…AGHNERRRKS (78 aa)) form an SBP-type zinc finger. Residues C110, C115, C132, H135, C151, C154, H158, and C170 each contribute to the Zn(2+) site. Residues 167–183 (KRSCRRRLAGHNERRRK) carry the Bipartite nuclear localization signal motif. The tract at residues 175 to 216 (AGHNERRRKSAADTAHGENCRHADQDAGRSHQGTGNPPFQIR) is disordered. A compositionally biased stretch (basic and acidic residues) spans 189–203 (AHGENCRHADQDAGR). Residues 205–216 (HQGTGNPPFQIR) are compositionally biased toward polar residues.

Ubiquitous.

The protein localises to the nucleus. Its function is as follows. Trans-acting factor that binds specifically to the consensus nucleotide sequence 5'-TNCGTACAA-3'. May be involved in panicle development. The protein is Squamosa promoter-binding-like protein 13 (SPL13) of Oryza sativa subsp. japonica (Rice).